Reading from the N-terminus, the 385-residue chain is Torsin-3A (385 aa).

The signal sequence occupies residues 1-21 (MFLGALWLLLLLPLRPPGAQG). Residue Asn110 is glycosylated (N-linked (GlcNAc...) asparagine). Residue 155-162 (GWSGTGKN) participates in ATP binding.

It belongs to the ClpA/ClpB family. Torsin subfamily. In terms of assembly, interacts with TOR1AIP1. Post-translationally, N-glycosylated.

It localises to the cytoplasm. Its subcellular location is the endoplasmic reticulum lumen. The sequence is that of Torsin-3A (Tor3a) from Mus musculus (Mouse).